Here is a 186-residue protein sequence, read N- to C-terminus: Nicotinamide-nucleotide adenylyltransferase (186 aa).

Belongs to the archaeal NMN adenylyltransferase family.

The protein resides in the cytoplasm. The enzyme catalyses beta-nicotinamide D-ribonucleotide + ATP + H(+) = diphosphate + NAD(+). It functions in the pathway cofactor biosynthesis; NAD(+) biosynthesis; NAD(+) from nicotinamide D-ribonucleotide: step 1/1. In Thermococcus sibiricus (strain DSM 12597 / MM 739), this protein is Nicotinamide-nucleotide adenylyltransferase.